We begin with the raw amino-acid sequence, 628 residues long: Kinesin-like protein tea2 (628 aa).

The interaction with mal3 stretch occupies residues 2–122; the sequence is SSSSSKPVNT…TTSQQTNSKG (121 aa). Phosphoserine is present on S82. In terms of domain architecture, Kinesin motor spans 132 to 460; sequence GIITSIRIRP…LKFASRAQNL (329 aa). Position 218–225 (218–225) interacts with ATP; the sequence is GMTGTGKT. Positions 530–557 form a coiled coil; it reads LRMEELLSDHNFEIADLRDELQDKEQII. Residues 588–628 are disordered; the sequence is VTRGSRSSSDQFSNETKTEILPDDQQQSKKDSVTQETQLLS. A compositionally biased stretch (polar residues) spans 589-602; that stretch reads TRGSRSSSDQFSNE. Residues 603–620 show a composition bias toward basic and acidic residues; sequence TKTEILPDDQQQSKKDSV.

Belongs to the TRAFAC class myosin-kinesin ATPase superfamily. Kinesin family. In terms of assembly, interacts with mal3 and tip1.

It localises to the cytoplasm. The protein localises to the cytoskeleton. Promotes microtubule growth, possibly through interactions with the microtubule end, and is important for establishing and maintaining polarized growth along the long axis of the cell. Acts as a kinesin motor protein that moves along microtubules and is required for proper localization of tea1 and tip1 to the cell tips and microtubules, respectively. ATPase activity stimulated via interaction with mal3. This chain is Kinesin-like protein tea2, found in Schizosaccharomyces pombe (strain 972 / ATCC 24843) (Fission yeast).